A 612-amino-acid polypeptide reads, in one-letter code: MDIKKLQDYQKHIRNFSIVAHIDHGKSTIADRILELTDTVSERQMKNQLLDDMPLERQRGITIKLNSVEVKYHAKDGETYIFHLIDTPGHVDFSYEVSRSLAACEGALLVVDATQGVQAQTLANTYLAIDDDLEILPVINKIDLPSADPEMCKNEIEEMIGLDASDAVEVSGKTGQGIPELLEEIVKKVPAPDGDLNAPLKALIFDSKYDDYRGVVLSVRIEEGTVKPGDKIRIMNTGKEFEVTEVGVSSPHPVKKDMLIAGDVGYLTANIKSVRETRVGDTITSAETPTEKPLPGYRQIPPMVYSGMYPVDNQKYDDLKEALQKLQLNDAALEFEPETSQALGFGFRCGFLGLLHMDVVQERLEQEFGMDLIMTAPSVDYHAIMNDGSTKLIDNPADLPDAGEYKEVQEPYVKAEIMVPNDFVGPVMELCQRKRGEFVTMDYLDKYRVNVIYNMPLAEIIYDFFDELKSSTKGYASLDYEITGYRATDLVKIDMLLNKEPIDALSFIAHREEAQNRARQMTTMLKKLIPRQNFEVDIQGAIGAKIISRATIKPYRKDVTWKIHTGDPDRRAKLLEKQRRGKKRMKAVGRVEVPQDAFMAVLKMNDDDIKGK.

The region spanning 11–193 (KHIRNFSIVA…EIVKKVPAPD (183 aa)) is the tr-type G domain. Residues 23–28 (DHGKST) and 140–143 (NKID) each bind GTP.

Belongs to the TRAFAC class translation factor GTPase superfamily. Classic translation factor GTPase family. LepA subfamily.

It localises to the cell membrane. The catalysed reaction is GTP + H2O = GDP + phosphate + H(+). In terms of biological role, required for accurate and efficient protein synthesis under certain stress conditions. May act as a fidelity factor of the translation reaction, by catalyzing a one-codon backward translocation of tRNAs on improperly translocated ribosomes. Back-translocation proceeds from a post-translocation (POST) complex to a pre-translocation (PRE) complex, thus giving elongation factor G a second chance to translocate the tRNAs correctly. Binds to ribosomes in a GTP-dependent manner. The protein is Elongation factor 4 of Lactobacillus johnsonii (strain CNCM I-12250 / La1 / NCC 533).